The sequence spans 262 residues: MEYFDAHCHLNCEPLLSEIEKSIANFKLINLKANVVGTDLDNSKIAVELAKKYPDLLKATIGIHPNDVHLVDFKKTKKQLNELLINNRNFISCIGEYGFDYHYTTEFIELQNKFFEMQFEIAETNKLVHMLHIRDAHEKIYEILTRLKPTQPVIFHCFSQDINIAKKLLSLKDLNIDIFFSIPGIVTFKNAQALHEALKIIPSELLLSETDSPWLTPSPFRGKVNWPEYVVHTVSTVAEIKKIEIAEMKRIIVKNAKKLFWH.

His7, His9, Glu96, His132, His156, and Asp211 together coordinate a divalent metal cation.

Belongs to the metallo-dependent hydrolases superfamily. TatD-type hydrolase family. A divalent metal cation serves as cofactor.

This is an uncharacterized protein from Mycoplasma genitalium (strain ATCC 33530 / DSM 19775 / NCTC 10195 / G37) (Mycoplasmoides genitalium).